The chain runs to 188 residues: dITP/XTP pyrophosphatase (188 aa).

Residue 10 to 15 coordinates substrate; the sequence is TSNPHK. The Mg(2+) site is built by glutamate 39 and aspartate 69. The active-site Proton acceptor is the aspartate 69. Residues serine 70, 145-148, lysine 168, and 173-174 each bind substrate; these read FGFD and HR.

This sequence belongs to the HAM1 NTPase family. As to quaternary structure, homodimer. Requires Mg(2+) as cofactor.

The enzyme catalyses XTP + H2O = XMP + diphosphate + H(+). It carries out the reaction dITP + H2O = dIMP + diphosphate + H(+). It catalyses the reaction ITP + H2O = IMP + diphosphate + H(+). Its function is as follows. Pyrophosphatase that catalyzes the hydrolysis of nucleoside triphosphates to their monophosphate derivatives, with a high preference for the non-canonical purine nucleotides XTP (xanthosine triphosphate), dITP (deoxyinosine triphosphate) and ITP. Seems to function as a house-cleaning enzyme that removes non-canonical purine nucleotides from the nucleotide pool, thus preventing their incorporation into DNA/RNA and avoiding chromosomal lesions. This chain is dITP/XTP pyrophosphatase, found in Ignicoccus hospitalis (strain KIN4/I / DSM 18386 / JCM 14125).